A 754-amino-acid chain; its full sequence is 5-methyltetrahydropteroyltriglutamate--homocysteine methyltransferase (754 aa).

Residues arginine 17–lysine 20 and lysine 117 each bind 5-methyltetrahydropteroyltri-L-glutamate. L-homocysteine contacts are provided by residues isoleucine 431 to serine 433 and glutamate 484. Residues isoleucine 431–serine 433 and glutamate 484 contribute to the L-methionine site. 5-methyltetrahydropteroyltri-L-glutamate is bound by residues arginine 515–cysteine 516 and tryptophan 561. Aspartate 599 serves as a coordination point for L-homocysteine. An L-methionine-binding site is contributed by aspartate 599. 5-methyltetrahydropteroyltri-L-glutamate is bound at residue glutamate 605. Zn(2+) contacts are provided by histidine 641, cysteine 643, and glutamate 665. Catalysis depends on histidine 694, which acts as the Proton donor. Cysteine 726 provides a ligand contact to Zn(2+).

This sequence belongs to the vitamin-B12 independent methionine synthase family. The cofactor is Zn(2+).

It carries out the reaction 5-methyltetrahydropteroyltri-L-glutamate + L-homocysteine = tetrahydropteroyltri-L-glutamate + L-methionine. The protein operates within amino-acid biosynthesis; L-methionine biosynthesis via de novo pathway; L-methionine from L-homocysteine (MetE route): step 1/1. Catalyzes the transfer of a methyl group from 5-methyltetrahydrofolate to homocysteine resulting in methionine formation. This is 5-methyltetrahydropteroyltriglutamate--homocysteine methyltransferase from Salmonella typhimurium (strain LT2 / SGSC1412 / ATCC 700720).